We begin with the raw amino-acid sequence, 134 residues long: Large ribosomal subunit protein bL20 (134 aa).

The protein belongs to the bacterial ribosomal protein bL20 family.

Its function is as follows. Binds directly to 23S ribosomal RNA and is necessary for the in vitro assembly process of the 50S ribosomal subunit. It is not involved in the protein synthesizing functions of that subunit. The polypeptide is Large ribosomal subunit protein bL20 (Sinorhizobium fredii (strain NBRC 101917 / NGR234)).